The following is a 364-amino-acid chain: Carbamoyl phosphate synthase small chain (364 aa).

CPSase regions lie at residues 1–167 and 1–171; these read MKRQ…PSPG and MKRQ…RGER. Residues Ser45, Gly219, and Gly221 each coordinate L-glutamine. Positions 171–358 constitute a Glutamine amidotransferase type-1 domain; that stretch reads RIVLIDFGMK…LALIREFNKK (188 aa). The Nucleophile role is filled by Cys246. Positions 247, 250, 288, 290, and 291 each coordinate L-glutamine. Active-site residues include His331 and Glu333.

Belongs to the CarA family. In terms of assembly, composed of two chains; the small (or glutamine) chain promotes the hydrolysis of glutamine to ammonia, which is used by the large (or ammonia) chain to synthesize carbamoyl phosphate. Tetramer of heterodimers (alpha,beta)4.

It carries out the reaction hydrogencarbonate + L-glutamine + 2 ATP + H2O = carbamoyl phosphate + L-glutamate + 2 ADP + phosphate + 2 H(+). It catalyses the reaction L-glutamine + H2O = L-glutamate + NH4(+). It participates in amino-acid biosynthesis; L-arginine biosynthesis; carbamoyl phosphate from bicarbonate: step 1/1. It functions in the pathway pyrimidine metabolism; UMP biosynthesis via de novo pathway; (S)-dihydroorotate from bicarbonate: step 1/3. Small subunit of the glutamine-dependent carbamoyl phosphate synthetase (CPSase). CPSase catalyzes the formation of carbamoyl phosphate from the ammonia moiety of glutamine, carbonate, and phosphate donated by ATP, constituting the first step of 2 biosynthetic pathways, one leading to arginine and/or urea and the other to pyrimidine nucleotides. The small subunit (glutamine amidotransferase) binds and cleaves glutamine to supply the large subunit with the substrate ammonia. This Bacillus caldolyticus protein is Carbamoyl phosphate synthase small chain.